Reading from the N-terminus, the 614-residue chain is Signal recognition particle receptor subunit alpha homolog (614 aa).

The interval 119–244 is disordered; the sequence is EASAKQVKAP…DRSRDSPDDV (126 aa). The segment covering 149–160 has biased composition (basic and acidic residues); the sequence is QDDKKPVEKRVN. The segment covering 164 to 178 has biased composition (pro residues); sequence APPPSKSQPSSPPTG. Basic and acidic residues predominate over residues 232–241; that stretch reads ALLDRSRDSP. Phosphoserine is present on residues Ser-237 and Ser-240. Tyr-246 carries the phosphotyrosine modification. Phosphoserine occurs at positions 268, 278, and 279. A compositionally biased stretch (acidic residues) spans 268–285; the sequence is SEDEADNEDASSEGEAEE. The segment at 268–290 is disordered; sequence SEDEADNEDASSEGEAEEQVQSK. Residues 396–613 form an NG domain region; the sequence is YTIIFCGVNG…NVNAVVNSLM (218 aa). GTP contacts are provided by residues 402-409, 497-501, and 565-568; these read GVNGVGKS, DTAGR, and TKFD.

It belongs to the GTP-binding SRP family. In terms of assembly, heterodimer of SrpRalpha and SrpRbeta. As to expression, in 8-9 hours embryos, expression is seen in a segmental pattern along embryonic ventral midline.

It is found in the endoplasmic reticulum membrane. Functionally, component of the SRP (signal recognition particle) receptor. Ensures, in conjunction with the signal recognition particle, the correct targeting of the nascent secretory proteins to the endoplasmic reticulum membrane system. Forms a guanosine 5'-triphosphate (GTP)-dependent complex with the SRP subunit Srp54. SRP receptor compaction and GTPase rearrangement drive SRP-mediated cotranslational protein translocation into the ER. May have a role in axonogenesis. This chain is Signal recognition particle receptor subunit alpha homolog, found in Drosophila melanogaster (Fruit fly).